The primary structure comprises 131 residues: Large ribosomal subunit protein bL17 (131 aa).

It belongs to the bacterial ribosomal protein bL17 family. Part of the 50S ribosomal subunit. Contacts protein L32.

This Cupriavidus pinatubonensis (strain JMP 134 / LMG 1197) (Cupriavidus necator (strain JMP 134)) protein is Large ribosomal subunit protein bL17.